The following is a 219-amino-acid chain: Probable transaldolase (219 aa).

K83 acts as the Schiff-base intermediate with substrate in catalysis.

This sequence belongs to the transaldolase family. Type 3B subfamily.

It is found in the cytoplasm. The catalysed reaction is D-sedoheptulose 7-phosphate + D-glyceraldehyde 3-phosphate = D-erythrose 4-phosphate + beta-D-fructose 6-phosphate. Its pathway is carbohydrate degradation; pentose phosphate pathway; D-glyceraldehyde 3-phosphate and beta-D-fructose 6-phosphate from D-ribose 5-phosphate and D-xylulose 5-phosphate (non-oxidative stage): step 2/3. In terms of biological role, transaldolase is important for the balance of metabolites in the pentose-phosphate pathway. This chain is Probable transaldolase, found in Cereibacter sphaeroides (strain ATCC 17029 / ATH 2.4.9) (Rhodobacter sphaeroides).